Reading from the N-terminus, the 556-residue chain is Urocanate hydratase (556 aa).

Residues 52 to 53 (GG), Gln130, 176 to 178 (GMG), Glu196, Arg201, 242 to 243 (NA), 263 to 267 (QTSAH), 273 to 274 (YL), and Tyr322 contribute to the NAD(+) site. The active site involves Cys410. Position 492 (Gly492) interacts with NAD(+).

This sequence belongs to the urocanase family. Requires NAD(+) as cofactor.

It is found in the cytoplasm. It catalyses the reaction 4-imidazolone-5-propanoate = trans-urocanate + H2O. Its pathway is amino-acid degradation; L-histidine degradation into L-glutamate; N-formimidoyl-L-glutamate from L-histidine: step 2/3. Catalyzes the conversion of urocanate to 4-imidazolone-5-propionate. This chain is Urocanate hydratase, found in Shewanella frigidimarina (strain NCIMB 400).